The sequence spans 154 residues: Ribonuclease 8 (154 aa).

The first 27 residues, Met-1–Ala-27, serve as a signal peptide directing secretion. Residue His-42 is the Proton acceptor of the active site. 3 cysteine pairs are disulfide-bonded: Cys-64-Cys-118, Cys-82-Cys-133, and Cys-89-Cys-96. Residues Lys-65–Thr-69 and Lys-90 contribute to the substrate site. The active-site Proton donor is His-149.

Belongs to the pancreatic ribonuclease family.

The protein resides in the secreted. In terms of biological role, has a low ribonuclease activity. The protein is Ribonuclease 8 (RNASE8) of Miopithecus talapoin (Angolan talapoin).